The chain runs to 212 residues: MAAPPQLRALLVVVNALLRKRRYHAALAVLKGFRNGAVYGAKIRAPHALVMTFLFRNGSLQEKLWAILQATYIHSWNLARFVFTYKGLRALQSYIQGKTYPAHAFLAAFLGGILVFGENNNINSQINMYLLSRVLFALSRLAVEKGYIPEPRWDPFPLLTAVVWGLVLWLFEYHRSTLQPSLQSSMTYLYEDSNVWHDISDFLVYNKSRPSN.

Residue Asn57 is glycosylated (N-linked (GlcNAc...) asparagine). The next 2 membrane-spanning stretches (helical) occupy residues 97 to 117 (GKTY…LVFG) and 153 to 173 (WDPF…LFEY). The N-linked (GlcNAc...) asparagine glycan is linked to Asn206.

This sequence belongs to the peroxisomal membrane protein PXMP2/4 family. As to quaternary structure, interacts with PEX19. Expressed in normal prostate epithelial cells, and androgen-sensitive prostate adenocarcinoma cells. Not expressed in androgen-insensitive prostate adenocarcinoma cells.

The protein resides in the peroxisome membrane. The sequence is that of Peroxisomal membrane protein 4 (PXMP4) from Homo sapiens (Human).